A 144-amino-acid chain; its full sequence is Putative pre-16S rRNA nuclease (144 aa).

The protein belongs to the YqgF nuclease family.

It localises to the cytoplasm. In terms of biological role, could be a nuclease involved in processing of the 5'-end of pre-16S rRNA. This Oleidesulfovibrio alaskensis (strain ATCC BAA-1058 / DSM 17464 / G20) (Desulfovibrio alaskensis) protein is Putative pre-16S rRNA nuclease.